We begin with the raw amino-acid sequence, 2159 residues long: Autophagy-related protein 2 (2159 aa).

Disordered regions lie at residues 98–126 (KGAN…PALP), 292–403 (LSPA…DIDS), 428–475 (DHEG…LGFN), 490–552 (TMLP…NEEA), 585–612 (GGWA…AGRE), 624–682 (VPLD…TASA), 726–766 (FDGH…RTPV), and 980–1001 (TVTS…TPIG). Basic and acidic residues-rich tracts occupy residues 300-315 (DISE…RSSE) and 380-401 (GRFD…HEDI). 3 stretches are compositionally biased toward polar residues: residues 449–475 (PSEN…LGFN), 507–517 (HSQPTLPSSTA), and 540–549 (ADSSVSSTLN). Composition is skewed to polar residues over residues 630–642 (SDTT…TILP) and 669–681 (QASS…STAS). Residues 728–737 (GHSDSSRSRT) are compositionally biased toward basic and acidic residues.

This sequence belongs to the ATG2 family.

The protein localises to the preautophagosomal structure membrane. It localises to the endoplasmic reticulum membrane. It carries out the reaction a 1,2-diacyl-sn-glycero-3-phosphocholine(in) = a 1,2-diacyl-sn-glycero-3-phosphocholine(out). The catalysed reaction is a 1,2-diacyl-sn-glycero-3-phospho-L-serine(in) = a 1,2-diacyl-sn-glycero-3-phospho-L-serine(out). The enzyme catalyses a 1,2-diacyl-sn-glycero-3-phosphoethanolamine(in) = a 1,2-diacyl-sn-glycero-3-phosphoethanolamine(out). Functionally, lipid transfer protein required for autophagosome completion and peroxisome degradation. Tethers the edge of the isolation membrane (IM) to the endoplasmic reticulum (ER) and mediates direct lipid transfer from ER to IM for IM expansion. Atg2 binds to the ER exit site (ERES), which is the membrane source for autophagosome formation, using basic residues in its N-terminal region (NR) and to the expanding edge of the IM through its C-terminal region. The latter binding is assisted by an atg18-PtdIns3P interaction. Atg2 then extracts phospholipids from the membrane source using its NR and transfers them to atg9 to the IM through its predicted beta-sheet-rich structure for membrane expansion. The polypeptide is Autophagy-related protein 2 (atg2) (Sclerotinia sclerotiorum (strain ATCC 18683 / 1980 / Ss-1) (White mold)).